The chain runs to 593 residues: MAAASSSDSDSGRAESNEANSKWLDAHYDPMANIHTFSSCLSLADLHGDGEYKLVVGDLGPGGQQPRLKVLKGPTVLTESPLPALPASAATFLMDQHEPRTPALALASGPCVYVYKNLRPYFKFSLPQLPPNPLEQDVWNQAKEDQIDPLTLKEMLEDIREKADVPLSVQSLRFLQLELSEMEAFVNQHKSKVIKRQTVITTMTTLKKNLADEDAASCLVLGTESKELLVLDPEAFTILAKMSLPSVPVFLEVSGQFDVEFRLTAACRNGSIYILRRDSKHPKYCIELSAQPVGLVRVHKVLVVGSTQESLHGFTHKGKKLWTVQMPAAILTMNLLEQRSRGLQAVMAALANGEVRIYRDKALLNVIHAPDAVTSLCFGRYGREDNTLIMTTRGGGLIIKILKRTAVFVEGTGEVGPPLAQTTKLSVPRKTRLYVDQTLREREAGTAMHRTFQTDLYLLRLRAARAYVQALESSLSPMSTTAREPLKLHAVVQGLGPTFKLTLHLQNTSTARPVLGLHVCFLYNKALYALPQAFFKVPLLVPGLSYPLETFVESLSSKGISDMIKVLVLREGQSAPLLSAHINMPVSEGLAAA.

Position 2 is an N-acetylalanine (Ala-2).

Part of BBSome complex, that contains BBS1, BBS2, BBS4, BBS5, BBS7, BBS8/TTC8, BBS9 and BBIP10. Interacts with the C-terminus of RAB3IP. Interacts with CCDC28B and ALDOB. Interacts with PKD1.

The protein resides in the cell projection. Its subcellular location is the cilium membrane. The protein localises to the cytoplasm. It is found in the cytoskeleton. It localises to the microtubule organizing center. The protein resides in the centrosome. Its subcellular location is the centriolar satellite. Its function is as follows. The BBSome complex is thought to function as a coat complex required for sorting of specific membrane proteins to the primary cilia. The BBSome complex is required for ciliogenesis but is dispensable for centriolar satellite function. This ciliogenic function is mediated in part by the Rab8 GDP/GTP exchange factor, which localizes to the basal body and contacts the BBSome. Rab8(GTP) enters the primary cilium and promotes extension of the ciliary membrane. Firstly the BBSome associates with the ciliary membrane and binds to RAB3IP/Rabin8, the guanosyl exchange factor (GEF) for Rab8 and then the Rab8-GTP localizes to the cilium and promotes docking and fusion of carrier vesicles to the base of the ciliary membrane. The BBSome complex, together with the LTZL1, controls SMO ciliary trafficking and contributes to the sonic hedgehog (SHH) pathway regulation. Required for proper BBSome complex assembly. Plays a role in olfactory cilium biogenesis/maintenance and trafficking and is essential for the localization of the BBSome complex in the olfactory sensory neurons cilia. The sequence is that of BBSome complex member BBS1 (Bbs1) from Mus musculus (Mouse).